A 147-amino-acid chain; its full sequence is Large ribosomal subunit protein uL15 (147 aa).

The tract at residues Met1–Pro62 is disordered. Gly residues-rich tracts occupy residues Arg21–Ala31 and Ser42–Gly52.

It belongs to the universal ribosomal protein uL15 family. As to quaternary structure, part of the 50S ribosomal subunit.

In terms of biological role, binds to the 23S rRNA. The polypeptide is Large ribosomal subunit protein uL15 (Syntrophotalea carbinolica (strain DSM 2380 / NBRC 103641 / GraBd1) (Pelobacter carbinolicus)).